Consider the following 123-residue polypeptide: MVRATGSVASRSRRKRVLKQAKGFWGDRKGHFRQSRSSVMRAMAFNYMHRKDRKGDFRSLWITRLNVASRIHGLSYSRLINGLKQAGIHLNRKMLSEMAIHDPQGFAVVATQAKLALEAAVQG.

Belongs to the bacterial ribosomal protein bL20 family.

Binds directly to 23S ribosomal RNA and is necessary for the in vitro assembly process of the 50S ribosomal subunit. It is not involved in the protein synthesizing functions of that subunit. The polypeptide is Large ribosomal subunit protein bL20 (Chlamydia trachomatis serovar L2b (strain UCH-1/proctitis)).